Here is a 231-residue protein sequence, read N- to C-terminus: Orotate phosphoribosyltransferase (231 aa).

5-phospho-alpha-D-ribose 1-diphosphate is bound by residues Lys27, 79–80 (YK), Arg106, Lys107, Lys110, His112, and 133–141 (DDVMTAGTA). Orotate contacts are provided by Thr137 and Arg166.

It belongs to the purine/pyrimidine phosphoribosyltransferase family. PyrE subfamily. Homodimer. It depends on Mg(2+) as a cofactor.

It carries out the reaction orotidine 5'-phosphate + diphosphate = orotate + 5-phospho-alpha-D-ribose 1-diphosphate. It functions in the pathway pyrimidine metabolism; UMP biosynthesis via de novo pathway; UMP from orotate: step 1/2. Functionally, catalyzes the transfer of a ribosyl phosphate group from 5-phosphoribose 1-diphosphate to orotate, leading to the formation of orotidine monophosphate (OMP). The polypeptide is Orotate phosphoribosyltransferase (Bifidobacterium longum (strain DJO10A)).